Consider the following 886-residue polypeptide: Valine--tRNA ligase (886 aa).

The 'HIGH' region signature appears at 53-63 (PNVTGSLHMGH). Positions 540-544 (KMSKS) match the 'KMSKS' region motif. Residue Lys543 coordinates ATP. The stretch at 820–851 (IDVAAERRRMEKDLAAAQKELASTAAKLANAD) forms a coiled coil.

Belongs to the class-I aminoacyl-tRNA synthetase family. ValS type 1 subfamily. Monomer.

The protein localises to the cytoplasm. It catalyses the reaction tRNA(Val) + L-valine + ATP = L-valyl-tRNA(Val) + AMP + diphosphate. In terms of biological role, catalyzes the attachment of valine to tRNA(Val). As ValRS can inadvertently accommodate and process structurally similar amino acids such as threonine, to avoid such errors, it has a 'posttransfer' editing activity that hydrolyzes mischarged Thr-tRNA(Val) in a tRNA-dependent manner. In Mycobacterium leprae (strain TN), this protein is Valine--tRNA ligase.